The following is a 91-amino-acid chain: LYR motif-containing protein 4 (91 aa).

Arg-6 and Lys-44 together coordinate pantetheine 4'-phosphate. N6-succinyllysine is present on Lys-47.

Belongs to the complex I LYR family. In terms of assembly, homodimer. Component of the mitochondrial core iron-sulfur cluster (ISC) complex composed of NFS1, LYRM4, NDUFAB1, ISCU, FXN, and FDX2; this complex is a heterohexamer containing two copies of each monomer. Component of the cyteine desulfurase complex composed of NFS1, LYRM4 and NDUFAB1; this complex contributes to the stability and cysteine desulfurase activity of NFS1. Interacts with FXN; this interaction is nickel-dependent. Interacts with the cytoplasmic form of NFS1; the complex increases the stability of NFS1. Forms a complex with the cytoplasmic form of NFS1; this complex increases the stability and cysteine desulfurase activity of NFS1. Interacts with NFS1. Component of a complex composed of FXN, NFS1, LYRM4 and ISCU.

It is found in the mitochondrion. The protein localises to the nucleus. It functions in the pathway cofactor biosynthesis; iron-sulfur cluster biosynthesis. Stabilizing factor, of the core iron-sulfur cluster (ISC) assembly complex, that regulates, in association with NDUFAB1, the stability and the cysteine desulfurase activity of NFS1 and participates in the [2Fe-2S] clusters assembly on the scaffolding protein ISCU. The core iron-sulfur cluster (ISC) assembly complex is involved in the de novo synthesis of a [2Fe-2S] cluster, the first step of the mitochondrial iron-sulfur protein biogenesis. This process is initiated by the cysteine desulfurase complex (NFS1:LYRM4:NDUFAB1) that produces persulfide which is delivered on the scaffold protein ISCU in a FXN-dependent manner. Then this complex is stabilized by FDX2 which provides reducing equivalents to accomplish the [2Fe-2S] cluster assembly. Finally, the [2Fe-2S] cluster is transferred from ISCU to chaperone proteins, including HSCB, HSPA9 and GLRX5. May also participates in the iron-sulfur protein biogenesis in the cytoplasm through its interaction with the cytoplasmic form of NFS1. The polypeptide is LYR motif-containing protein 4 (Mus musculus (Mouse)).